A 231-amino-acid polypeptide reads, in one-letter code: Ribose-5-phosphate isomerase A (231 aa).

Substrate-binding positions include 32 to 35, 85 to 88, and 98 to 101; these read TGST, DGAD, and KGGG. Catalysis depends on glutamate 107, which acts as the Proton acceptor. A substrate-binding site is contributed by lysine 125.

This sequence belongs to the ribose 5-phosphate isomerase family. As to quaternary structure, homodimer.

It carries out the reaction aldehydo-D-ribose 5-phosphate = D-ribulose 5-phosphate. The protein operates within carbohydrate degradation; pentose phosphate pathway; D-ribose 5-phosphate from D-ribulose 5-phosphate (non-oxidative stage): step 1/1. Functionally, catalyzes the reversible conversion of ribose-5-phosphate to ribulose 5-phosphate. This Burkholderia mallei (strain NCTC 10247) protein is Ribose-5-phosphate isomerase A.